The chain runs to 449 residues: Deoxyguanosinetriphosphate triphosphohydrolase-like protein (449 aa).

Residues 1-27 (MTSSVWQERRHGEDKQRRNDHRSPYQR) form a disordered region. The span at 7–27 (QERRHGEDKQRRNDHRSPYQR) shows a compositional bias: basic and acidic residues. Positions 59-255 (RLTHSLEVSQ…MELADDIAYA (197 aa)) constitute an HD domain.

Belongs to the dGTPase family. Type 2 subfamily.

In Shewanella baltica (strain OS195), this protein is Deoxyguanosinetriphosphate triphosphohydrolase-like protein.